The chain runs to 689 residues: Glycine--tRNA ligase beta subunit (689 aa).

It belongs to the class-II aminoacyl-tRNA synthetase family. In terms of assembly, tetramer of two alpha and two beta subunits.

The protein localises to the cytoplasm. The catalysed reaction is tRNA(Gly) + glycine + ATP = glycyl-tRNA(Gly) + AMP + diphosphate. The protein is Glycine--tRNA ligase beta subunit of Salmonella typhi.